The chain runs to 940 residues: Lon protease homolog 1, mitochondrial (940 aa).

A mitochondrion-targeting transit peptide spans 1 to 61; sequence MLKLFTSSAS…AFFCSEPTNG (61 aa). The tract at residues 70–90 is disordered; sequence KAVESDSEVSDSKSSSAIVPT. Serine 74 carries the phosphoserine modification. The region spanning 100–309 is the Lon N-terminal domain; sequence VLALPVPHRP…LTLELMKKEM (210 aa). An ATP-binding site is contributed by 464–471; it reads GPPGVGKT. One can recognise a Lon proteolytic domain in the interval 751–935; sequence QTPVGVVMGL…GKIFELAFGY (185 aa). Catalysis depends on residues serine 841 and lysine 884.

This sequence belongs to the peptidase S16 family. In terms of assembly, homohexamer or homoheptamer. Organized in a ring with a central cavity.

It is found in the mitochondrion matrix. The catalysed reaction is Hydrolysis of proteins in presence of ATP.. ATP-dependent serine protease that mediates the selective degradation of misfolded, unassembled or oxidatively damaged polypeptides as well as certain short-lived regulatory proteins in the mitochondrial matrix. May also have a chaperone function in the assembly of inner membrane protein complexes. Participates in the regulation of mitochondrial gene expression and in the maintenance of the integrity of the mitochondrial genome. Binds to mitochondrial DNA in a site-specific manner. The polypeptide is Lon protease homolog 1, mitochondrial (LON1) (Arabidopsis thaliana (Mouse-ear cress)).